Reading from the N-terminus, the 467-residue chain is Putative laccase-16 (467 aa).

Plastocyanin-like domains follow at residues 7–88 (VLGS…PKHG), 98–225 (KEIP…YTDS), and 318–451 (DFPN…KDGK). Cu cation-binding residues include histidine 22, histidine 24, histidine 67, and histidine 69. Cu cation is bound by residues histidine 368, histidine 371, histidine 373, histidine 430, cysteine 431, histidine 432, histidine 436, and methionine 441.

Belongs to the multicopper oxidase family. It depends on Cu cation as a cofactor.

The protein localises to the secreted. It is found in the extracellular space. It localises to the apoplast. The enzyme catalyses 4 hydroquinone + O2 = 4 benzosemiquinone + 2 H2O. In terms of biological role, lignin degradation and detoxification of lignin-derived products. The chain is Putative laccase-16 (LAC16) from Oryza sativa subsp. japonica (Rice).